The sequence spans 388 residues: Succinate--CoA ligase [ADP-forming] subunit beta (388 aa).

Residues 9–244 (KALFAEYGLP…PSQDDAREAH (236 aa)) form the ATP-grasp domain. Residues Lys46, 53-55 (GRG), Glu99, Thr102, and Glu107 each bind ATP. Mg(2+) contacts are provided by Asn199 and Asp213. Substrate contacts are provided by residues Asn264 and 321–323 (GIV).

Belongs to the succinate/malate CoA ligase beta subunit family. In terms of assembly, heterotetramer of two alpha and two beta subunits. Requires Mg(2+) as cofactor.

The catalysed reaction is succinate + ATP + CoA = succinyl-CoA + ADP + phosphate. The enzyme catalyses GTP + succinate + CoA = succinyl-CoA + GDP + phosphate. Its pathway is carbohydrate metabolism; tricarboxylic acid cycle; succinate from succinyl-CoA (ligase route): step 1/1. Its function is as follows. Succinyl-CoA synthetase functions in the citric acid cycle (TCA), coupling the hydrolysis of succinyl-CoA to the synthesis of either ATP or GTP and thus represents the only step of substrate-level phosphorylation in the TCA. The beta subunit provides nucleotide specificity of the enzyme and binds the substrate succinate, while the binding sites for coenzyme A and phosphate are found in the alpha subunit. The sequence is that of Succinate--CoA ligase [ADP-forming] subunit beta from Shewanella pealeana (strain ATCC 700345 / ANG-SQ1).